Reading from the N-terminus, the 526-residue chain is Ubiquitin carboxyl-terminal hydrolase 17-like protein A (526 aa).

Positions 1–21 are disordered; it reads MVVALSFPEADPALSSPDAPE. The 298-residue stretch at 51-348 folds into the USP domain; the sequence is CGLQNTGNSC…NAYVLFYVQQ (298 aa). Residue Cys60 is the Nucleophile of the active site. The active-site Proton acceptor is His307. Over residues 374 to 385 the composition is skewed to basic residues; sequence KKSRRKKHKKKS. Disordered stretches follow at residues 374-394 and 465-494; these read KKSR…LGEP and RSTA…SQGP. The segment covering 473–486 has biased composition (basic and acidic residues); the sequence is DSPDKENQPLHNAD.

Belongs to the peptidase C19 family. Post-translationally, polyubiquitinated; ubiquitination leads to its subsequent degradation. Expressed in hematopoietic progenitor cell lines Ba/F3 and FDCP1. Not detected in brain, lung, liver, kidney, thymus, spleen and bone marrow.

The enzyme catalyses Thiol-dependent hydrolysis of ester, thioester, amide, peptide and isopeptide bonds formed by the C-terminal Gly of ubiquitin (a 76-residue protein attached to proteins as an intracellular targeting signal).. In terms of biological role, deubiquitinating enzyme that removes conjugated ubiquitin from specific proteins to regulate different cellular processes. Has deubiquitinating enzyme activity for DNAH5, suggesting a role in the regulation of DNAH5 degradation by the ubiquitin-proteasome pathway. Has growth-suppressing activity; induces arrest in G1 phase upon controlled expression. In Mus musculus (Mouse), this protein is Ubiquitin carboxyl-terminal hydrolase 17-like protein A (Usp17la).